Reading from the N-terminus, the 159-residue chain is MQQGWLSNWLVKHEVVHRSLGFDHRGIETLQIKAEDWDSIAVILYVYGYNYLRSQCAYDVAPGGSLASVYHLTRIQYGIDNPEEVCIKVFAQKDNPRIPSVFWIWRSSDFQERESFDMVGISYDNHPRLKRILMPESWIGWPLRKDYITPNFYEIQDAH.

It belongs to the complex I 30 kDa subunit family. As to quaternary structure, NDH is composed of at least 16 different subunits, 5 of which are encoded in the nucleus.

The protein resides in the plastid. It is found in the chloroplast thylakoid membrane. The catalysed reaction is a plastoquinone + NADH + (n+1) H(+)(in) = a plastoquinol + NAD(+) + n H(+)(out). It catalyses the reaction a plastoquinone + NADPH + (n+1) H(+)(in) = a plastoquinol + NADP(+) + n H(+)(out). NDH shuttles electrons from NAD(P)H:plastoquinone, via FMN and iron-sulfur (Fe-S) centers, to quinones in the photosynthetic chain and possibly in a chloroplast respiratory chain. The immediate electron acceptor for the enzyme in this species is believed to be plastoquinone. Couples the redox reaction to proton translocation, and thus conserves the redox energy in a proton gradient. This chain is NAD(P)H-quinone oxidoreductase subunit J, chloroplastic, found in Oryza nivara (Indian wild rice).